We begin with the raw amino-acid sequence, 357 residues long: Peptide chain release factor 1 (357 aa).

At Q234 the chain carries N5-methylglutamine.

Belongs to the prokaryotic/mitochondrial release factor family. Post-translationally, methylated by PrmC. Methylation increases the termination efficiency of RF1.

It localises to the cytoplasm. Peptide chain release factor 1 directs the termination of translation in response to the peptide chain termination codons UAG and UAA. In Lactococcus lactis subsp. cremoris (strain MG1363), this protein is Peptide chain release factor 1.